We begin with the raw amino-acid sequence, 335 residues long: MYSLIRKCLFSMDAETAHNFSIQALKLAGKLPINVLPMPLNPVEVMGLQFKNPIGLAAGADKNGEAIDGFGKLGFGFIEVGTVTPVAQDGNPKPRQFRILEAEGIINRNGFNNLGVDVLVENVKKAKYDGIIGINIGKNAVTPIERALDDYQICLRKVYEHADYITVNISSPNTKNLRTLQYGEALDDLLRSLKSEQESLSQKFNRYKPLVLKIAPDLTDEEIASVADSLVRYKIDGVIAGNTTLSRDPVVGLKNAEQQGGLSGKPLNTLSTRLISTLAKELNGALPIIGSGGIHSVASGQEKIDAGASLLQVYSAMIYQGPALIQNLAKHIQVR.

FMN contacts are provided by residues 58–62 (AGADK) and threonine 82. A substrate-binding site is contributed by lysine 62. 107–111 (NRNGF) is a binding site for substrate. Asparagine 135 and asparagine 168 together coordinate FMN. Position 168 (asparagine 168) interacts with substrate. The active-site Nucleophile is the serine 171. Asparagine 173 serves as a coordination point for substrate. Lysine 213 and glycine 241 together coordinate FMN. 242–243 (NT) provides a ligand contact to substrate. FMN contacts are provided by residues glycine 264, glycine 293, and 314–315 (YS).

It belongs to the dihydroorotate dehydrogenase family. Type 2 subfamily. In terms of assembly, monomer. The cofactor is FMN.

Its subcellular location is the cell membrane. The enzyme catalyses (S)-dihydroorotate + a quinone = orotate + a quinol. The protein operates within pyrimidine metabolism; UMP biosynthesis via de novo pathway; orotate from (S)-dihydroorotate (quinone route): step 1/1. Catalyzes the conversion of dihydroorotate to orotate with quinone as electron acceptor. The chain is Dihydroorotate dehydrogenase (quinone) from Actinobacillus pleuropneumoniae serotype 5b (strain L20).